Here is a 212-residue protein sequence, read N- to C-terminus: Pyridoxine/pyridoxamine 5'-phosphate oxidase (212 aa).

Substrate contacts are provided by residues 8–11 (RRTY) and K66. Residues 61–66 (RIVLLK), 76–77 (FT), R82, K83, and Q105 each bind FMN. 3 residues coordinate substrate: Y123, R127, and S131. FMN is bound by residues 140–141 (QS) and W184. 190–192 (RLH) is a substrate binding site. R194 is a binding site for FMN.

The protein belongs to the pyridoxamine 5'-phosphate oxidase family. As to quaternary structure, homodimer. FMN is required as a cofactor.

The catalysed reaction is pyridoxamine 5'-phosphate + O2 + H2O = pyridoxal 5'-phosphate + H2O2 + NH4(+). It catalyses the reaction pyridoxine 5'-phosphate + O2 = pyridoxal 5'-phosphate + H2O2. Its pathway is cofactor metabolism; pyridoxal 5'-phosphate salvage; pyridoxal 5'-phosphate from pyridoxamine 5'-phosphate: step 1/1. It participates in cofactor metabolism; pyridoxal 5'-phosphate salvage; pyridoxal 5'-phosphate from pyridoxine 5'-phosphate: step 1/1. Catalyzes the oxidation of either pyridoxine 5'-phosphate (PNP) or pyridoxamine 5'-phosphate (PMP) into pyridoxal 5'-phosphate (PLP). The polypeptide is Pyridoxine/pyridoxamine 5'-phosphate oxidase (Cupriavidus taiwanensis (strain DSM 17343 / BCRC 17206 / CCUG 44338 / CIP 107171 / LMG 19424 / R1) (Ralstonia taiwanensis (strain LMG 19424))).